The chain runs to 209 residues: Peptide methionine sulfoxide reductase MsrA (209 aa).

Cys-51 is a catalytic residue.

This sequence belongs to the MsrA Met sulfoxide reductase family.

It catalyses the reaction L-methionyl-[protein] + [thioredoxin]-disulfide + H2O = L-methionyl-(S)-S-oxide-[protein] + [thioredoxin]-dithiol. It carries out the reaction [thioredoxin]-disulfide + L-methionine + H2O = L-methionine (S)-S-oxide + [thioredoxin]-dithiol. Functionally, has an important function as a repair enzyme for proteins that have been inactivated by oxidation. Catalyzes the reversible oxidation-reduction of methionine sulfoxide in proteins to methionine. The chain is Peptide methionine sulfoxide reductase MsrA from Vibrio vulnificus (strain CMCP6).